A 148-amino-acid polypeptide reads, in one-letter code: 1,4-dihydroxy-2-naphthoyl-CoA hydrolase (148 aa).

Residue aspartate 15 is part of the active site.

It belongs to the 4-hydroxybenzoyl-CoA thioesterase family. DHNA-CoA hydrolase subfamily.

It catalyses the reaction 1,4-dihydroxy-2-naphthoyl-CoA + H2O = 1,4-dihydroxy-2-naphthoate + CoA + H(+). The protein operates within cofactor biosynthesis; phylloquinone biosynthesis. Its pathway is quinol/quinone metabolism; 1,4-dihydroxy-2-naphthoate biosynthesis; 1,4-dihydroxy-2-naphthoate from chorismate: step 7/7. In terms of biological role, catalyzes the hydrolysis of 1,4-dihydroxy-2-naphthoyl-CoA (DHNA-CoA) to 1,4-dihydroxy-2-naphthoate (DHNA), a reaction involved in phylloquinone (vitamin K1) biosynthesis. The chain is 1,4-dihydroxy-2-naphthoyl-CoA hydrolase from Nostoc punctiforme (strain ATCC 29133 / PCC 73102).